The primary structure comprises 269 residues: Formamidopyrimidine-DNA glycosylase (269 aa).

The active-site Schiff-base intermediate with DNA is the P2. The active-site Proton donor is E3. The active-site Proton donor; for beta-elimination activity is the K57. The DNA site is built by H90, R109, and R150. The segment at 235–269 (QVYGRAGEACLTCGTTIKRSKHGQRTTFYCPHCQR) adopts an FPG-type zinc-finger fold. Catalysis depends on R259, which acts as the Proton donor; for delta-elimination activity.

It belongs to the FPG family. As to quaternary structure, monomer. Zn(2+) serves as cofactor.

It carries out the reaction Hydrolysis of DNA containing ring-opened 7-methylguanine residues, releasing 2,6-diamino-4-hydroxy-5-(N-methyl)formamidopyrimidine.. The catalysed reaction is 2'-deoxyribonucleotide-(2'-deoxyribose 5'-phosphate)-2'-deoxyribonucleotide-DNA = a 3'-end 2'-deoxyribonucleotide-(2,3-dehydro-2,3-deoxyribose 5'-phosphate)-DNA + a 5'-end 5'-phospho-2'-deoxyribonucleoside-DNA + H(+). Involved in base excision repair of DNA damaged by oxidation or by mutagenic agents. Acts as a DNA glycosylase that recognizes and removes damaged bases. Has a preference for oxidized purines, such as 7,8-dihydro-8-oxoguanine (8-oxoG). Has AP (apurinic/apyrimidinic) lyase activity and introduces nicks in the DNA strand. Cleaves the DNA backbone by beta-delta elimination to generate a single-strand break at the site of the removed base with both 3'- and 5'-phosphates. In Edwardsiella ictaluri (strain 93-146), this protein is Formamidopyrimidine-DNA glycosylase.